The following is a 266-amino-acid chain: Endoplasmic reticulum vesicle protein 25 (266 aa).

A signal peptide spans 1–26 (MGSSPQSSTRTLLGLLFLLLVQLSSA). Topologically, residues 27 to 188 (LKFDLHASSG…TNESTNERVK (162 aa)) are lumenal. The GOLD domain maps to 39–129 (ERCIRNFVFK…YKSVELDVEI (91 aa)). Residues 189 to 209 (WFAFGTMGMLVGLGVWQVVYL) traverse the membrane as a helical segment. Over 210-266 (RAYFRYVDFPVSWRVDGVVANCCSCCEQVEASYLRSSRVVFWSPLVMWTRLSWLILR) the chain is Cytoplasmic.

The protein belongs to the EMP24/GP25L family.

The protein localises to the endoplasmic reticulum membrane. Its subcellular location is the golgi apparatus membrane. Its function is as follows. Constituent of COPII-coated endoplasmic reticulum-derived transport vesicles. Required for efficient transport of a subset of secretory proteins to the Golgi. Facilitates retrograde transport from the Golgi to the endoplasmic reticulum. This is Endoplasmic reticulum vesicle protein 25 (erv25) from Aspergillus fumigatus (strain ATCC MYA-4609 / CBS 101355 / FGSC A1100 / Af293) (Neosartorya fumigata).